The primary structure comprises 85 residues: Sec-independent protein translocase protein TatA (85 aa).

A helical membrane pass occupies residues 1–21 (MAGLQGWQLVIIILLAILLFA). The tract at residues 43-85 (VKQMRTEGKDAKDERSGTGSTAADEPVEGRVVDRDETDPRDQR) is disordered. 2 stretches are compositionally biased toward basic and acidic residues: residues 44 to 58 (KQMR…DERS) and 69 to 85 (VEGR…RDQR).

It belongs to the TatA/E family. In terms of assembly, the Tat system comprises two distinct complexes: a TatABC complex, containing multiple copies of TatA, TatB and TatC subunits, and a separate TatA complex, containing only TatA subunits. Substrates initially bind to the TatABC complex, which probably triggers association of the separate TatA complex to form the active translocon.

The protein resides in the cell membrane. Its function is as follows. Part of the twin-arginine translocation (Tat) system that transports large folded proteins containing a characteristic twin-arginine motif in their signal peptide across membranes. TatA could form the protein-conducting channel of the Tat system. The chain is Sec-independent protein translocase protein TatA from Micrococcus luteus (strain ATCC 4698 / DSM 20030 / JCM 1464 / CCM 169 / CCUG 5858 / IAM 1056 / NBRC 3333 / NCIMB 9278 / NCTC 2665 / VKM Ac-2230) (Micrococcus lysodeikticus).